Reading from the N-terminus, the 327-residue chain is Malate dehydrogenase (327 aa).

11-17 (GAAGQIA) is a binding site for NAD(+). Substrate-binding residues include Arg-92 and Arg-98. Residues Asn-105, Gln-112, and 129–131 (VGN) contribute to the NAD(+) site. Positions 131 and 162 each coordinate substrate. The active-site Proton acceptor is the His-187.

It belongs to the LDH/MDH superfamily. MDH type 2 family.

It catalyses the reaction (S)-malate + NAD(+) = oxaloacetate + NADH + H(+). Its function is as follows. Catalyzes the reversible oxidation of malate to oxaloacetate. The protein is Malate dehydrogenase of Nitrosospira multiformis (strain ATCC 25196 / NCIMB 11849 / C 71).